Here is a 173-residue protein sequence, read N- to C-terminus: Photosystem I assembly protein Ycf3 (173 aa).

3 TPR repeats span residues 35–68 (AYVYYRDGLSAQNAGDYAEALENYEESLKLEESP), 72–105 (SETLKNMAIIYMSNGDEDLALDTYQRALDQNSNQ), and 120–153 (GRTAQEAGLQDEADQLFDRAADVWTQAVRLYPGG).

Belongs to the Ycf3 family.

The protein resides in the cellular thylakoid membrane. Functionally, essential for the assembly of the photosystem I (PSI) complex. May act as a chaperone-like factor to guide the assembly of the PSI subunits. The polypeptide is Photosystem I assembly protein Ycf3 (Prochlorococcus marinus (strain MIT 9303)).